Here is a 586-residue protein sequence, read N- to C-terminus: Beta-fructofuranosidase, insoluble isoenzyme 3 (586 aa).

The first 26 residues, methionine 1–alanine 26, serve as a signal peptide directing secretion. The active site involves aspartate 61. N-linked (GlcNAc...) asparagine glycosylation is found at asparagine 154, asparagine 179, asparagine 341, asparagine 390, and asparagine 479.

It belongs to the glycosyl hydrolase 32 family.

It is found in the secreted. The protein localises to the extracellular space. Its subcellular location is the apoplast. The protein resides in the cell wall. The enzyme catalyses Hydrolysis of terminal non-reducing beta-D-fructofuranoside residues in beta-D-fructofuranosides.. The sequence is that of Beta-fructofuranosidase, insoluble isoenzyme 3 (CIN3) from Oryza sativa subsp. indica (Rice).